The chain runs to 532 residues: Muscarinic acetylcholine receptor M5 (532 aa).

The Extracellular portion of the chain corresponds to 1–29 (MEGDSYGNATTINGTPVNHQPLERHRLWE). An N-linked (GlcNAc...) asparagine glycan is attached at Asn8. A helical membrane pass occupies residues 30–53 (VITIAAVTAVVSLITIVGNVLVMI). Residues 54–66 (SFKVNSQLKTVNN) lie on the Cytoplasmic side of the membrane. The helical transmembrane segment at 67 to 87 (YYLLSLACADLIIGIFSMNLY) threads the bilayer. Over 88–104 (TTYILMGRWALGSLACD) the chain is Extracellular. The chain crosses the membrane as a helical span at residues 105–126 (LWLALDYVASNASVMNLLVISF). The Cytoplasmic segment spans residues 127–146 (DRYFSITRPLTYRAKRTPKR). Residues 147 to 169 (AGIMIGLAWLISFILWAPAILCW) form a helical membrane-spanning segment. Over 170–191 (QYLVGKRTVPPDECQIQFLSEP) the chain is Extracellular. A helical transmembrane segment spans residues 192 to 214 (TITFGTAIAAFYIPVSVMTILYC). The Cytoplasmic segment spans residues 215–443 (RIYRETEKRT…LVKERKAAQT (229 aa)). The tract at residues 263–294 (QRERNQASRSSSHRSTSITGKPSQATGPSTNW) is disordered. The segment covering 270–279 (SRSSSHRSTS) has biased composition (low complexity). The segment covering 280-294 (ITGKPSQATGPSTNW) has biased composition (polar residues). A helical transmembrane segment spans residues 444-464 (LSAILLAFIITWTPYNIMVLV). At 465–478 (STFCDKCVPVALWH) the chain is on the extracellular side. The chain crosses the membrane as a helical span at residues 479-498 (LGYWLCYVNSTVNPICYALC). At 499–532 (NRTFRKTFKMLLLCQWKKKKVEEKLYWQGNSKLP) the chain is on the cytoplasmic side. 2 positions are modified to phosphothreonine: Thr501 and Thr505.

It belongs to the G-protein coupled receptor 1 family. Muscarinic acetylcholine receptor subfamily. CHRM5 sub-subfamily.

It is found in the cell membrane. Its subcellular location is the postsynaptic cell membrane. Functionally, the muscarinic acetylcholine receptor mediates various cellular responses, including inhibition of adenylate cyclase, breakdown of phosphoinositides and modulation of potassium channels through the action of G proteins. Primary transducing effect is Pi turnover. The protein is Muscarinic acetylcholine receptor M5 (CHRM5) of Saimiri boliviensis boliviensis (Bolivian squirrel monkey).